A 565-amino-acid chain; its full sequence is Transmembrane 7 superfamily member 3 (565 aa).

Positions Met-1–Ala-21 are cleaved as a signal peptide. 4 N-linked (GlcNAc...) asparagine glycosylation sites follow: Asn-22, Asn-56, Asn-70, and Asn-259. 7 helical membrane-spanning segments follow: residues Val-287 to Gly-307, Trp-311 to Ile-331, Val-341 to Trp-361, Phe-364 to Ser-384, Val-402 to Leu-422, Ile-427 to Phe-447, and Asn-478 to Ile-498.

The protein resides in the cell membrane. Functionally, involved in the inhibition of cytokine-induced death of pancreatic beta cells. Involved in the promotion of insulin secretion from pancreatic beta cells. Is a downstream transcriptional target of p53/TP53, and acts as a pro-survival homeostatic factor that attenuates the development of cellular stress. Maintains protein homeostasis and promotes cell survival through attenuation of endoplasmic reticulum (ER) stress and the subsequent induction of unfolded protein response (UPR). This is Transmembrane 7 superfamily member 3 (Tm7sf3) from Rattus norvegicus (Rat).